A 512-amino-acid chain; its full sequence is Cytoplasmic tRNA 2-thiolation protein 2-A (512 aa).

It belongs to the CTU2/NCS2 family.

Its subcellular location is the cytoplasm. Its pathway is tRNA modification; 5-methoxycarbonylmethyl-2-thiouridine-tRNA biosynthesis. Functionally, plays a central role in 2-thiolation of mcm(5)S(2)U at tRNA wobble positions of tRNA(Lys), tRNA(Glu) and tRNA(Gln). May act by forming a heterodimer with ctu1/atpbd3 that ligates sulfur from thiocarboxylated urm1 onto the uridine of tRNAs at wobble position. This Xenopus laevis (African clawed frog) protein is Cytoplasmic tRNA 2-thiolation protein 2-A (ctu2-a).